A 192-amino-acid polypeptide reads, in one-letter code: A-type ATP synthase subunit E (192 aa).

This sequence belongs to the V-ATPase E subunit family. Has multiple subunits with at least A(3), B(3), C, D, E, F, H, I and proteolipid K(x).

It localises to the cell membrane. Component of the A-type ATP synthase that produces ATP from ADP in the presence of a proton gradient across the membrane. The chain is A-type ATP synthase subunit E from Halorubrum lacusprofundi (strain ATCC 49239 / DSM 5036 / JCM 8891 / ACAM 34).